The chain runs to 153 residues: MAATRRLTRELSDLVEAKMSTLRNIESSDESLLMWTGLLVPEKAPYNKGAFRIEINFPPQYPFMPPKILFKTKIYHPNVDEKGEVCLPIISTDNWKPTTRTEQVLQALVAIVHNPEPEHPLRSDLAEEFVREHKKFMKTAEEFTKKNAEKRPE.

The region spanning Ala2–Glu149 is the UBC core domain. The active-site Glycyl thioester intermediate is Cys86.

It belongs to the ubiquitin-conjugating enzyme family.

The enzyme catalyses S-ubiquitinyl-[E1 ubiquitin-activating enzyme]-L-cysteine + [E2 ubiquitin-conjugating enzyme]-L-cysteine = [E1 ubiquitin-activating enzyme]-L-cysteine + S-ubiquitinyl-[E2 ubiquitin-conjugating enzyme]-L-cysteine.. The protein operates within protein modification; protein ubiquitination. In terms of biological role, catalyzes the covalent attachment of ubiquitin to other proteins. This is Ubiquitin-conjugating enzyme E2-18 kDa (Ubc84D) from Drosophila melanogaster (Fruit fly).